The sequence spans 52 residues: Gene 5.9 protein (52 aa).

This is Gene 5.9 protein (5.9) from Enterobacteria phage T3 (Bacteriophage T3).